The sequence spans 673 residues: Annexin A6 (673 aa).

Ala-2 carries the post-translational modification N-acetylalanine. The residue at position 13 (Ser-13) is a Phosphoserine. 8 Annexin repeats span residues 20–91 (FNPS…GLMR), 92–163 (PPAY…VLLQ), 175–247 (DLVQ…AVVK), 251–322 (STAE…KLCG), 363–434 (FNPD…GLMM), 435–506 (PPAH…SLAT), 521–595 (EDAQ…AIVQ), and 599–670 (NKPL…AICG). Phosphotyrosine is present on Tyr-30. 4 positions are modified to N6-acetyllysine: Lys-63, Lys-68, Lys-75, and Lys-81. Tyr-201 is subject to Phosphotyrosine. Lys-306, Lys-370, and Lys-418 each carry N6-acetyllysine. Position 422 is a phosphoserine (Ser-422). Lys-483 carries the post-translational modification N6-acetyllysine. Residue Ser-537 is modified to Phosphoserine. Position 620 is an N6-acetyllysine (Lys-620).

Belongs to the annexin family. Post-translationally, phosphorylated in response to growth factor stimulation.

It is found in the cytoplasm. It localises to the melanosome. Its function is as follows. May associate with CD21. May regulate the release of Ca(2+) from intracellular stores. The protein is Annexin A6 (ANXA6) of Bos taurus (Bovine).